Reading from the N-terminus, the 257-residue chain is Phosphate import ATP-binding protein PstB (257 aa).

Residues L11–I252 enclose the ABC transporter domain. G43–S50 contributes to the ATP binding site.

The protein belongs to the ABC transporter superfamily. Phosphate importer (TC 3.A.1.7) family. The complex is composed of two ATP-binding proteins (PstB), two transmembrane proteins (PstC and PstA) and a solute-binding protein (PstS).

The protein localises to the cell inner membrane. The catalysed reaction is phosphate(out) + ATP + H2O = ADP + 2 phosphate(in) + H(+). Part of the ABC transporter complex PstSACB involved in phosphate import. Responsible for energy coupling to the transport system. The sequence is that of Phosphate import ATP-binding protein PstB from Chromobacterium violaceum (strain ATCC 12472 / DSM 30191 / JCM 1249 / CCUG 213 / NBRC 12614 / NCIMB 9131 / NCTC 9757 / MK).